A 182-amino-acid polypeptide reads, in one-letter code: ADP-ribosylation factor 3 (182 aa).

The N-myristoyl glycine moiety is linked to residue Gly-2. GTP contacts are provided by residues 24-31 (GLDNAGKT), 67-71 (DLGGQ), and 126-129 (NKQD).

It belongs to the small GTPase superfamily. Arf family. In terms of assembly, interacts with GRIP; but preferentially when bound to GTP.

It is found in the golgi apparatus. In terms of biological role, GTP-binding protein involved in protein trafficking; may modulate vesicle budding and uncoating within the Golgi apparatus. This chain is ADP-ribosylation factor 3 (ARF3), found in Arabidopsis thaliana (Mouse-ear cress).